Here is a 147-residue protein sequence, read N- to C-terminus: Sentan (147 aa).

The interval 14-34 (RLEGEPNPPAAPTSTLAPKNM) is disordered. Polar residues predominate over residues 25 to 34 (PTSTLAPKNM).

The protein belongs to the S-100 family.

The protein localises to the cell projection. It is found in the cilium. Its function is as follows. May be a component of the linker structure that bridges the ciliary membrane and peripheral singlet microtubules. This Bos taurus (Bovine) protein is Sentan (SNTN).